The sequence spans 292 residues: 33 kDa chaperonin (292 aa).

2 disulfides stabilise this stretch: Cys229–Cys231 and Cys262–Cys265.

This sequence belongs to the HSP33 family. Under oxidizing conditions two disulfide bonds are formed involving the reactive cysteines. Under reducing conditions zinc is bound to the reactive cysteines and the protein is inactive.

The protein resides in the cytoplasm. Functionally, redox regulated molecular chaperone. Protects both thermally unfolding and oxidatively damaged proteins from irreversible aggregation. Plays an important role in the bacterial defense system toward oxidative stress. The sequence is that of 33 kDa chaperonin from Photobacterium profundum (strain SS9).